A 421-amino-acid chain; its full sequence is Caspase-12 (421 aa).

Residues 1-92 (MADKKPSKED…QLSLEYQHES (92 aa)) enclose the CARD domain. The residue at position 85 (serine 85) is a Phosphoserine. A disordered region spans residues 88-131 (YQHESEDQESEESSASSSSSTESEEENEESKDEERAASAHSMAV). Acidic residues predominate over residues 109-118 (ESEEENEESK). Residues histidine 252 and cysteine 300 contribute to the active site.

It belongs to the peptidase C14A family. In terms of assembly, heterotetramer that consists of two anti-parallel arranged heterodimers, each one formed by two subunits (Potential). May interact with TRAF2.

In terms of biological role, involved in the activation cascade of caspases responsible for apoptosis execution. In Macaca mulatta (Rhesus macaque), this protein is Caspase-12.